Consider the following 205-residue polypeptide: Regulator of G-protein signaling 4 (205 aa).

Residues Cys-2, Cys-12, and Cys-95 are each lipidated (S-palmitoyl cysteine). In terms of domain architecture, RGS spans Ser-62–Val-178.

Palmitoylated on Cys-2 and/or Cys-12. In terms of processing, phosphorylated by cyclic GMP-dependent protein kinase.

In terms of biological role, inhibits signal transduction by increasing the GTPase activity of G protein alpha subunits thereby driving them into their inactive GDP-bound form. Activity on G(z)-alpha is inhibited by phosphorylation of the G-protein. Activity on G(z)-alpha and G(i)-alpha-1 is inhibited by palmitoylation of the G-protein. The polypeptide is Regulator of G-protein signaling 4 (RGS4) (Bos taurus (Bovine)).